We begin with the raw amino-acid sequence, 512 residues long: tRNA-guanine(15) transglycosylase (512 aa).

Aspartate 85 functions as the Nucleophile in the catalytic mechanism. Aspartate 120 serves as a coordination point for substrate. Cysteine 272, cysteine 274, and cysteine 277 together coordinate Zn(2+).

The protein belongs to the archaeosine tRNA-ribosyltransferase family. It depends on Zn(2+) as a cofactor.

It catalyses the reaction guanosine(15) in tRNA + 7-cyano-7-deazaguanine = 7-cyano-7-carbaguanosine(15) in tRNA + guanine. It participates in tRNA modification; archaeosine-tRNA biosynthesis. In terms of biological role, exchanges the guanine residue with 7-cyano-7-deazaguanine (preQ0) at position 15 in the dihydrouridine loop (D-loop) of archaeal tRNAs. The polypeptide is tRNA-guanine(15) transglycosylase (Aeropyrum pernix (strain ATCC 700893 / DSM 11879 / JCM 9820 / NBRC 100138 / K1)).